A 237-amino-acid chain; its full sequence is CDP-diacylglycerol--serine O-phosphatidyltransferase (237 aa).

Transmembrane regions (helical) follow at residues 3-23, 25-45, 73-93, 95-115, 124-144, 150-170, 184-204, and 207-227; these read INPL…LGMM, IFYA…ASLI, VVAF…YNFG, IGMA…ARFN, YSFI…CVLL, FLEG…GVLM, WNLK…VRPL, and LSVF…FLMV.

This sequence belongs to the CDP-alcohol phosphatidyltransferase class-I family.

Its subcellular location is the cell membrane. The catalysed reaction is a CDP-1,2-diacyl-sn-glycerol + L-serine = a 1,2-diacyl-sn-glycero-3-phospho-L-serine + CMP + H(+). The protein is CDP-diacylglycerol--serine O-phosphatidyltransferase (pssA) of Helicobacter pylori (strain J99 / ATCC 700824) (Campylobacter pylori J99).